The following is a 71-amino-acid chain: Exodeoxyribonuclease 7 small subunit (71 aa).

This sequence belongs to the XseB family. Heterooligomer composed of large and small subunits.

The protein localises to the cytoplasm. The catalysed reaction is Exonucleolytic cleavage in either 5'- to 3'- or 3'- to 5'-direction to yield nucleoside 5'-phosphates.. Bidirectionally degrades single-stranded DNA into large acid-insoluble oligonucleotides, which are then degraded further into small acid-soluble oligonucleotides. The sequence is that of Exodeoxyribonuclease 7 small subunit from Streptococcus uberis (strain ATCC BAA-854 / 0140J).